Here is a 364-residue protein sequence, read N- to C-terminus: Protein-glutamate methylesterase/protein-glutamine glutaminase 3 (364 aa).

A Response regulatory domain is found at 7 to 124 (RVLIVDDSAS…THALLEASAR (118 aa)). 4-aspartylphosphate is present on aspartate 58. Residues 167 to 358 (PTTERLVCIG…REIMLWQDAK (192 aa)) enclose the CheB-type methylesterase domain. Catalysis depends on residues serine 178, histidine 204, and aspartate 300.

This sequence belongs to the CheB family. Post-translationally, phosphorylated by CheA. Phosphorylation of the N-terminal regulatory domain activates the methylesterase activity.

The protein resides in the cytoplasm. It catalyses the reaction [protein]-L-glutamate 5-O-methyl ester + H2O = L-glutamyl-[protein] + methanol + H(+). The catalysed reaction is L-glutaminyl-[protein] + H2O = L-glutamyl-[protein] + NH4(+). In terms of biological role, involved in chemotaxis. Part of a chemotaxis signal transduction system that modulates chemotaxis in response to various stimuli. Catalyzes the demethylation of specific methylglutamate residues introduced into the chemoreceptors (methyl-accepting chemotaxis proteins or MCP) by CheR. Also mediates the irreversible deamidation of specific glutamine residues to glutamic acid. The sequence is that of Protein-glutamate methylesterase/protein-glutamine glutaminase 3 from Rhodopseudomonas palustris (strain BisB18).